Reading from the N-terminus, the 201-residue chain is MTSTLHRTPLATAGLALVVALGGCGGGGGDSRETPPYVPKATTVDATTPAPAAEPLTIASPMFADGAPIPVQFSCKGANVAPPLTWSSPAGAAELALVVDDPDAVGGLYVHWIVTGIAPGSGSTADGQTPAGGHSVPNSGGRQGYFGPCPPAGTGTHHYRFTLYHLPVALQLPPGATGVQAAQAIAQAASGQARLVGTFEG.

Positions 1 to 23 (MTSTLHRTPLATAGLALVVALGG) are cleaved as a signal peptide. The N-palmitoyl cysteine moiety is linked to residue Cys24. Cys24 is lipidated: S-diacylglycerol cysteine. Prevents bacterial uptake by a human macrophage-like cell line stretches follow at residues 77–96 (GANVAPPLTWSSPAGAAELA), 97–116 (LVVDDPDAVGGLYVHWIVTG), and 117–136 (IAPGSGSTADGQTPAGGHSV). The interval 122–141 (GSTADGQTPAGGHSVPNSGG) is disordered.

The protein belongs to the UPF0098 family.

The protein resides in the cell membrane. It is found in the cell surface. Functionally, probably involved in bacterial recognition and uptake by its host (human). The chain is Putative lipoprotein LppC from Mycobacterium tuberculosis (strain ATCC 25618 / H37Rv).